The primary structure comprises 236 residues: Biosynthetic peptidoglycan transglycosylase (236 aa).

Residues 12–31 (ALLWFVAGSIVLVLVFRWVP) traverse the membrane as a helical segment.

The protein belongs to the glycosyltransferase 51 family.

The protein resides in the cell inner membrane. The enzyme catalyses [GlcNAc-(1-&gt;4)-Mur2Ac(oyl-L-Ala-gamma-D-Glu-L-Lys-D-Ala-D-Ala)](n)-di-trans,octa-cis-undecaprenyl diphosphate + beta-D-GlcNAc-(1-&gt;4)-Mur2Ac(oyl-L-Ala-gamma-D-Glu-L-Lys-D-Ala-D-Ala)-di-trans,octa-cis-undecaprenyl diphosphate = [GlcNAc-(1-&gt;4)-Mur2Ac(oyl-L-Ala-gamma-D-Glu-L-Lys-D-Ala-D-Ala)](n+1)-di-trans,octa-cis-undecaprenyl diphosphate + di-trans,octa-cis-undecaprenyl diphosphate + H(+). It functions in the pathway cell wall biogenesis; peptidoglycan biosynthesis. In terms of biological role, peptidoglycan polymerase that catalyzes glycan chain elongation from lipid-linked precursors. This chain is Biosynthetic peptidoglycan transglycosylase, found in Pseudomonas putida (strain ATCC 700007 / DSM 6899 / JCM 31910 / BCRC 17059 / LMG 24140 / F1).